The following is a 1159-amino-acid chain: PAN2-PAN3 deadenylation complex catalytic subunit pan2 (1159 aa).

One copy of the WD repeat lies at 276-315 (ANVSFMLGIDISPSGEALAINDAECMVHLWGSPAKIHFNE). A linker region spans residues 316–451 (MSKEVELADV…GAKLNGEAED (136 aa)). Residues 452-821 (DPLLKYSNVE…VPCVLAFQVK (370 aa)) enclose the USP domain. The 177-residue stretch at 872 to 1048 (LDTEFVDLEK…IEDARMALRL (177 aa)) folds into the Exonuclease domain. Residues D873, E875, D982, and D1041 each contribute to the a divalent metal cation site. Positions 1094 to 1159 (TAVTMQNTNS…GDFFGGSPLK (66 aa)) are disordered. The span at 1096–1106 (VTMQNTNSGRN) shows a compositional bias: polar residues. Over residues 1107 to 1128 (TPTVPDAAGAPAVPASAPTTPG) the composition is skewed to low complexity. The span at 1143–1153 (TFSGPGAGDFF) shows a compositional bias: gly residues.

This sequence belongs to the peptidase C19 family. PAN2 subfamily. In terms of assembly, forms a heterotrimer with an asymmetric homodimer of the regulatory subunit pan3 to form the poly(A)-nuclease (PAN) deadenylation complex. A divalent metal cation is required as a cofactor.

The protein resides in the cytoplasm. It catalyses the reaction Exonucleolytic cleavage of poly(A) to 5'-AMP.. Its activity is regulated as follows. Positively regulated by the regulatory subunit pan3. Functionally, catalytic subunit of the poly(A)-nuclease (PAN) deadenylation complex, one of two cytoplasmic mRNA deadenylases involved in mRNA turnover. PAN specifically shortens poly(A) tails of RNA and the activity is stimulated by poly(A)-binding protein pab1. PAN deadenylation is followed by rapid degradation of the shortened mRNA tails by the CCR4-NOT complex. Deadenylated mRNAs are then degraded by two alternative mechanisms, namely exosome-mediated 3'-5' exonucleolytic degradation, or deadenylation-dependent mRNA decaping and subsequent 5'-3' exonucleolytic degradation by xrn1. May also be involved in post-transcriptional maturation of mRNA poly(A) tails. This is PAN2-PAN3 deadenylation complex catalytic subunit pan2 from Aspergillus terreus (strain NIH 2624 / FGSC A1156).